A 644-amino-acid chain; its full sequence is Exoribonuclease 2 (644 aa).

The RNB domain occupies 189 to 516 (REDLTALNFV…NHRLLKAIIT (328 aa)). In terms of domain architecture, S1 motif spans 561–643 (DTRFTAEIID…ETRNVIARPV (83 aa)).

The protein belongs to the RNR ribonuclease family. RNase II subfamily.

Its subcellular location is the cytoplasm. The enzyme catalyses Exonucleolytic cleavage in the 3'- to 5'-direction to yield nucleoside 5'-phosphates.. In terms of biological role, involved in mRNA degradation. Hydrolyzes single-stranded polyribonucleotides processively in the 3' to 5' direction. The polypeptide is Exoribonuclease 2 (Yersinia pseudotuberculosis serotype O:3 (strain YPIII)).